Reading from the N-terminus, the 513-residue chain is ATP synthase subunit alpha (513 aa).

ATP is bound at residue 169-176; the sequence is GDRQTGKT.

This sequence belongs to the ATPase alpha/beta chains family. In terms of assembly, F-type ATPases have 2 components, CF(1) - the catalytic core - and CF(0) - the membrane proton channel. CF(1) has five subunits: alpha(3), beta(3), gamma(1), delta(1), epsilon(1). CF(0) has three main subunits: a(1), b(2) and c(9-12). The alpha and beta chains form an alternating ring which encloses part of the gamma chain. CF(1) is attached to CF(0) by a central stalk formed by the gamma and epsilon chains, while a peripheral stalk is formed by the delta and b chains.

Its subcellular location is the cell inner membrane. It carries out the reaction ATP + H2O + 4 H(+)(in) = ADP + phosphate + 5 H(+)(out). In terms of biological role, produces ATP from ADP in the presence of a proton gradient across the membrane. The alpha chain is a regulatory subunit. The protein is ATP synthase subunit alpha of Bordetella petrii (strain ATCC BAA-461 / DSM 12804 / CCUG 43448).